Here is a 247-residue protein sequence, read N- to C-terminus: MLVLRSGLTKALASRTLAPQVCSSFATGPRQYDGTFYEFRTYYLKPSNMNAFMENLKKNIHLRTSYSELVGFWSVEFGGRTNKVFHIWKYDNFAHRAEVRKALANCKEWQEQSIIPNLARIDKQETEITYLIPWSKLEKPPKEGVYELAVFQMKPGGPALWGDAFERAINAHVNLGYTKVVGVFHTEYGELNRVHVLWWNESADSRAAGRHKSHEDPRVVAAVRESVNYLVSQQNMLLIPASFSPLK.

2 positions are modified to N6-succinyllysine: Lys-45 and Lys-57.

Belongs to the NipSnap family.

The chain is Protein NipSnap homolog 3B (NIPSNAP3B) from Homo sapiens (Human).